Here is a 358-residue protein sequence, read N- to C-terminus: Envelope glycoprotein K (358 aa).

The first 33 residues, 1–33 (MSRVQCLRLAAVIASISHLIFLVWFVCWNSVLE), serve as a signal peptide directing secretion. The Extracellular portion of the chain corresponds to 34 to 141 (NNEDCVYATR…LEMADCMAYL (108 aa)). N-linked (GlcNAc...) asparagine; by host glycosylation is found at Asn-57 and Asn-80. Residues 142 to 162 (WFFQVRTATAALLMYLAFLCV) form a helical membrane-spanning segment. Topologically, residues 163–235 (NRQRRGFGPW…DTLGFYLMHP (73 aa)) are cytoplasmic. The chain crosses the membrane as a helical span at residues 236–256 (LALLLRAIETILYFASLVASA). At 257 to 273 (TVLRVNFDPCSVVLPNH) the chain is on the extracellular side. The helical transmembrane segment at 274 to 294 (VKVFAWVFVAALGALEVVSAI) threads the bilayer. The Cytoplasmic segment spans residues 295–323 (DHLRRETRSARDAAAVIRPTNIIAACCAN). A helical transmembrane segment spans residues 324-344 (IISHVLLRMLYGAALVLVVIG). Over 345–358 (ALKYEREIQTRLLG) the chain is Extracellular.

It belongs to the alphaherpesvirinae glycoprotein K family. As to quaternary structure, interacts (via UL20 interaction region) with protein UL20 (via N-terminus); this interaction probably plays a role in the coordinate transport of protein UL20 and gK to the trans-Golgi network (TGN), and is required for the cell surface expression of gK.

The protein localises to the host cell membrane. Its subcellular location is the host endosome membrane. The protein resides in the host Golgi apparatus membrane. Its function is as follows. Glycoprotein that probably modulates membrane fusion events during secondary envelopment of cytoplasmic capsids that bud into specific trans-Golgi network (TGN)-derived membranes. Also plays a role, together with gB, in virus-induced cell-to-cell fusion (syncytia formation). Seems to block fusion of virions with infected-cell membranes. This is Envelope glycoprotein K (gK) from Psittacid herpesvirus 1 (isolate Amazon parrot/-/97-0001/1997) (PsHV-1).